A 142-amino-acid chain; its full sequence is Prefoldin subunit alpha (142 aa).

Belongs to the prefoldin subunit alpha family. In terms of assembly, heterohexamer of two alpha and four beta subunits.

Its subcellular location is the cytoplasm. Functionally, molecular chaperone capable of stabilizing a range of proteins. Seems to fulfill an ATP-independent, HSP70-like function in archaeal de novo protein folding. The chain is Prefoldin subunit alpha from Methanosarcina acetivorans (strain ATCC 35395 / DSM 2834 / JCM 12185 / C2A).